The sequence spans 934 residues: Bifunctional uridylyltransferase/uridylyl-removing enzyme (934 aa).

The tract at residues 1 to 379 is uridylyltransferase; sequence MSAHDLKLEE…TFSRRKRKLS (379 aa). The tract at residues 380-736 is uridylyl-removing; that stretch reads DDGAFISENH…AKPHAFEAVT (357 aa). The HD domain occupies 496 to 613; that stretch reads VDEHLLRCIA…IDFADTVQTM (118 aa). ACT domains follow at residues 737 to 818 and 848 to 931; these read EITV…DMLA and VIEV…RSPQ.

The protein belongs to the GlnD family. Mg(2+) serves as cofactor.

The catalysed reaction is [protein-PII]-L-tyrosine + UTP = [protein-PII]-uridylyl-L-tyrosine + diphosphate. The enzyme catalyses [protein-PII]-uridylyl-L-tyrosine + H2O = [protein-PII]-L-tyrosine + UMP + H(+). Its activity is regulated as follows. Uridylyltransferase (UTase) activity is inhibited by glutamine, while glutamine activates uridylyl-removing (UR) activity. Its function is as follows. Modifies, by uridylylation and deuridylylation, the PII regulatory proteins (GlnB and homologs), in response to the nitrogen status of the cell that GlnD senses through the glutamine level. Under low glutamine levels, catalyzes the conversion of the PII proteins and UTP to PII-UMP and PPi, while under higher glutamine levels, GlnD hydrolyzes PII-UMP to PII and UMP (deuridylylation). Thus, controls uridylylation state and activity of the PII proteins, and plays an important role in the regulation of nitrogen assimilation and metabolism. In Brucella suis (strain ATCC 23445 / NCTC 10510), this protein is Bifunctional uridylyltransferase/uridylyl-removing enzyme.